The following is a 758-amino-acid chain: Vitamin K-dependent gamma-carboxylase (758 aa).

A disordered region spans residues 1-29 (MAVHRGSARAAPASDKVQKNKPAQTSGLE). Residue A2 is modified to N-acetylalanine. Residues 2–60 (AVHRGSARAAPASDKVQKNKPAQTSGLEQGSRMARIFGFEWADLSSWQSVVTLLNRPTD) lie on the Cytoplasmic side of the membrane. Residues 61-81 (PANLAVFRFLFAFLMLLDIPQ) traverse the membrane as a helical segment. Topologically, residues 82 to 113 (ERGLSSLDRKYLDGLDVCRFPLLDALRPLPLD) are lumenal. C99 and C450 are joined by a disulfide. Residues 114–134 (WMYLVYTIMFLGALGMMLGLW) form a helical membrane-spanning segment. Residues 135-136 (YR) are Cytoplasmic-facing. The helical transmembrane segment at 137 to 157 (LSCMLFLLPYWYVFLLDKTSW) threads the bilayer. The Lumenal portion of the chain corresponds to 158 to 292 (NNHSYLYGLL…VSYFHCMNSQ (135 aa)). A helical transmembrane segment spans residues 293 to 313 (LFSIGMFPYVMLASSPLFCSA). Residues 314–361 (EWPRKLVARCPKRLQELLPAKAAPRPSASCVYKRARAKAGQKPGLRHH) are Cytoplasmic-facing. The helical transmembrane segment at 362-382 (LGTVFTLLYLLEQLFLPYSHF) threads the bilayer. Residues 383–758 (LTQGYNNWTN…PDSEHVHSEL (376 aa)) lie on the Lumenal side of the membrane. The disordered stretch occupies residues 727 to 758 (PFEPVDESSASNTDSSDPHPSEPDSEHVHSEL). Residues 742–758 (SDPHPSEPDSEHVHSEL) show a composition bias toward basic and acidic residues.

The protein belongs to the vitamin K-dependent gamma-carboxylase family. Monomer. Interacts with CALU.

The protein localises to the endoplasmic reticulum membrane. The enzyme catalyses 4-carboxy-L-glutamyl-[protein] + 2,3-epoxyphylloquinone + H2O + H(+) = phylloquinol + L-glutamyl-[protein] + CO2 + O2. Its function is as follows. Mediates the vitamin K-dependent carboxylation of glutamate residues to calcium-binding gamma-carboxyglutamate (Gla) residues with the concomitant conversion of the reduced hydroquinone form of vitamin K to vitamin K epoxide. Catalyzes gamma-carboxylation of various proteins, such as blood coagulation factors (F2, F7, F9 and F10), osteocalcin (BGLAP) or matrix Gla protein (MGP). This Rattus norvegicus (Rat) protein is Vitamin K-dependent gamma-carboxylase (Ggcx).